A 569-amino-acid chain; its full sequence is Glutamate--tRNA ligase (569 aa).

Residues 107–117 carry the 'HIGH' region motif; that stretch reads PEPNGYPHIGH.

This sequence belongs to the class-I aminoacyl-tRNA synthetase family. Glutamate--tRNA ligase type 2 subfamily.

It is found in the cytoplasm. The catalysed reaction is tRNA(Glu) + L-glutamate + ATP = L-glutamyl-tRNA(Glu) + AMP + diphosphate. Functionally, catalyzes the attachment of glutamate to tRNA(Glu) in a two-step reaction: glutamate is first activated by ATP to form Glu-AMP and then transferred to the acceptor end of tRNA(Glu). The polypeptide is Glutamate--tRNA ligase (Nitrosopumilus maritimus (strain SCM1)).